Here is a 193-residue protein sequence, read N- to C-terminus: Ion-translocating oxidoreductase complex subunit A (193 aa).

6 consecutive transmembrane segments (helical) span residues alanine 5–leucine 25, leucine 39–leucine 59, tryptophan 62–alanine 82, serine 102–leucine 122, valine 134–leucine 154, and alanine 172–alanine 192.

This sequence belongs to the NqrDE/RnfAE family. The complex is composed of six subunits: RnfA, RnfB, RnfC, RnfD, RnfE and RnfG.

The protein localises to the cell inner membrane. Part of a membrane-bound complex that couples electron transfer with translocation of ions across the membrane. The chain is Ion-translocating oxidoreductase complex subunit A from Aromatoleum aromaticum (strain DSM 19018 / LMG 30748 / EbN1) (Azoarcus sp. (strain EbN1)).